The following is a 381-amino-acid chain: UDP-N-acetylglucosamine--N-acetylmuramyl-(pentapeptide) pyrophosphoryl-undecaprenol N-acetylglucosamine transferase (381 aa).

Residues 10-12, asparagine 124, arginine 165, serine 207, isoleucine 263, and glutamine 308 each bind UDP-N-acetyl-alpha-D-glucosamine; that span reads TGG.

This sequence belongs to the glycosyltransferase 28 family. MurG subfamily.

The protein resides in the cell inner membrane. The enzyme catalyses di-trans,octa-cis-undecaprenyl diphospho-N-acetyl-alpha-D-muramoyl-L-alanyl-D-glutamyl-meso-2,6-diaminopimeloyl-D-alanyl-D-alanine + UDP-N-acetyl-alpha-D-glucosamine = di-trans,octa-cis-undecaprenyl diphospho-[N-acetyl-alpha-D-glucosaminyl-(1-&gt;4)]-N-acetyl-alpha-D-muramoyl-L-alanyl-D-glutamyl-meso-2,6-diaminopimeloyl-D-alanyl-D-alanine + UDP + H(+). It functions in the pathway cell wall biogenesis; peptidoglycan biosynthesis. Cell wall formation. Catalyzes the transfer of a GlcNAc subunit on undecaprenyl-pyrophosphoryl-MurNAc-pentapeptide (lipid intermediate I) to form undecaprenyl-pyrophosphoryl-MurNAc-(pentapeptide)GlcNAc (lipid intermediate II). This is UDP-N-acetylglucosamine--N-acetylmuramyl-(pentapeptide) pyrophosphoryl-undecaprenol N-acetylglucosamine transferase from Trichlorobacter lovleyi (strain ATCC BAA-1151 / DSM 17278 / SZ) (Geobacter lovleyi).